The primary structure comprises 284 residues: Tropomyosin alpha-1 chain (284 aa).

The residue at position 1 (methionine 1) is an N-acetylmethionine. The interval 1 to 40 (MDAIKKKMQMLKLDKENALDRAEQAESDKKASEDRSKQLE) is disordered. A coiled-coil region spans residues 1-284 (MDAIKKKMQM…DHALNDMTSI (284 aa)). The segment covering 12 to 40 (KLDKENALDRAEQAESDKKASEDRSKQLE) has biased composition (basic and acidic residues).

As to quaternary structure, homodimer. Heterodimer of an alpha (TPM1, TPM3 or TPM4) and a beta (TPM2) chain.

It localises to the cytoplasm. Its subcellular location is the cytoskeleton. Binds to actin filaments in muscle and non-muscle cells. Plays a central role, in association with the troponin complex, in the calcium dependent regulation of vertebrate striated muscle contraction. Smooth muscle contraction is regulated by interaction with caldesmon. In non-muscle cells is implicated in stabilizing cytoskeleton actin filaments. The chain is Tropomyosin alpha-1 chain from Chelon auratus (Golden grey mullet).